A 72-amino-acid chain; its full sequence is Translation initiation factor IF-1 (72 aa).

The region spanning 1–72 (MAKQDVIELE…SRGRITYRYK (72 aa)) is the S1-like domain.

This sequence belongs to the IF-1 family. In terms of assembly, component of the 30S ribosomal translation pre-initiation complex which assembles on the 30S ribosome in the order IF-2 and IF-3, IF-1 and N-formylmethionyl-tRNA(fMet); mRNA recruitment can occur at any time during PIC assembly.

The protein localises to the cytoplasm. In terms of biological role, one of the essential components for the initiation of protein synthesis. Stabilizes the binding of IF-2 and IF-3 on the 30S subunit to which N-formylmethionyl-tRNA(fMet) subsequently binds. Helps modulate mRNA selection, yielding the 30S pre-initiation complex (PIC). Upon addition of the 50S ribosomal subunit IF-1, IF-2 and IF-3 are released leaving the mature 70S translation initiation complex. The sequence is that of Translation initiation factor IF-1 from Staphylococcus epidermidis (strain ATCC 35984 / DSM 28319 / BCRC 17069 / CCUG 31568 / BM 3577 / RP62A).